We begin with the raw amino-acid sequence, 478 residues long: Secretogranin-3 (478 aa).

A signal peptide spans 1–21; it reads MASKRLGFVVVLALVCQHINA. Disordered regions lie at residues 22-126 and 208-287; these read FPTP…NGMD and IGDR…EDGL. The span at 28 to 42 shows a compositional bias: basic and acidic residues; the sequence is PDDKYNRELTEEKPL. Residues 63–74 show a composition bias toward acidic residues; that stretch reads AEEETNSEDDDI. Over residues 97–120 the composition is skewed to basic and acidic residues; sequence ANERLGADDTDSTKNRRLADDYDS. A compositionally biased stretch (acidic residues) spans 235-259; sequence DEEDEVENEGGDDANGDEPQEEESR.

The protein resides in the cytoplasmic vesicle. It localises to the secretory vesicle lumen. The protein localises to the secretory vesicle membrane. Its subcellular location is the secreted. The chain is Secretogranin-3 (scg3) from Danio rerio (Zebrafish).